We begin with the raw amino-acid sequence, 268 residues long: Undecaprenyl-diphosphatase (268 aa).

The next 7 membrane-spanning stretches (helical) occupy residues 5–25, 43–63, 84–104, 106–126, 184–204, 213–233, and 248–268; these read SIIS…IPVS, GNTF…LVYF, FSVL…HGFI, AVLF…GVIL, AAEF…TLDL, FDDI…GIVV, and PFAI…WLVG.

The protein belongs to the UppP family.

The protein localises to the cell inner membrane. The catalysed reaction is di-trans,octa-cis-undecaprenyl diphosphate + H2O = di-trans,octa-cis-undecaprenyl phosphate + phosphate + H(+). Catalyzes the dephosphorylation of undecaprenyl diphosphate (UPP). Confers resistance to bacitracin. In Sinorhizobium fredii (strain NBRC 101917 / NGR234), this protein is Undecaprenyl-diphosphatase.